The chain runs to 214 residues: Guanylate kinase (214 aa).

Residues 12–191 (GLMLVMSSPS…SIAAVQAILA (180 aa)) form the Guanylate kinase-like domain. An ATP-binding site is contributed by 19-26 (SPSGAGKT).

This sequence belongs to the guanylate kinase family.

Its subcellular location is the cytoplasm. It carries out the reaction GMP + ATP = GDP + ADP. Functionally, essential for recycling GMP and indirectly, cGMP. This Paramagnetospirillum magneticum (strain ATCC 700264 / AMB-1) (Magnetospirillum magneticum) protein is Guanylate kinase.